Reading from the N-terminus, the 507-residue chain is ATP synthase subunit alpha (507 aa).

170-177 (GDRKTGKT) serves as a coordination point for ATP.

This sequence belongs to the ATPase alpha/beta chains family. As to quaternary structure, F-type ATPases have 2 components, CF(1) - the catalytic core - and CF(0) - the membrane proton channel. CF(1) has five subunits: alpha(3), beta(3), gamma(1), delta(1), epsilon(1). CF(0) has three main subunits: a(1), b(2) and c(9-12). The alpha and beta chains form an alternating ring which encloses part of the gamma chain. CF(1) is attached to CF(0) by a central stalk formed by the gamma and epsilon chains, while a peripheral stalk is formed by the delta and b chains.

Its subcellular location is the cell inner membrane. It catalyses the reaction ATP + H2O + 4 H(+)(in) = ADP + phosphate + 5 H(+)(out). Its function is as follows. Produces ATP from ADP in the presence of a proton gradient across the membrane. The alpha chain is a regulatory subunit. The polypeptide is ATP synthase subunit alpha (Anaplasma marginale (strain Florida)).